Consider the following 396-residue polypeptide: 1-deoxy-D-xylulose 5-phosphate reductoisomerase (396 aa).

NADPH is bound by residues Thr-10, Gly-11, Ser-12, Ile-13, Asn-38, and Asn-123. 1-deoxy-D-xylulose 5-phosphate is bound at residue Lys-124. Glu-125 contacts NADPH. Position 149 (Asp-149) interacts with Mn(2+). Ser-150, Glu-151, Ser-185, and His-208 together coordinate 1-deoxy-D-xylulose 5-phosphate. Mn(2+) is bound at residue Glu-151. Gly-214 contributes to the NADPH binding site. Residues Ser-221, Asn-226, Lys-227, and Glu-230 each contribute to the 1-deoxy-D-xylulose 5-phosphate site. Glu-230 serves as a coordination point for Mn(2+).

It belongs to the DXR family. Mg(2+) serves as cofactor. The cofactor is Mn(2+).

It catalyses the reaction 2-C-methyl-D-erythritol 4-phosphate + NADP(+) = 1-deoxy-D-xylulose 5-phosphate + NADPH + H(+). Its pathway is isoprenoid biosynthesis; isopentenyl diphosphate biosynthesis via DXP pathway; isopentenyl diphosphate from 1-deoxy-D-xylulose 5-phosphate: step 1/6. In terms of biological role, catalyzes the NADPH-dependent rearrangement and reduction of 1-deoxy-D-xylulose-5-phosphate (DXP) to 2-C-methyl-D-erythritol 4-phosphate (MEP). The protein is 1-deoxy-D-xylulose 5-phosphate reductoisomerase of Shewanella halifaxensis (strain HAW-EB4).